A 476-amino-acid chain; its full sequence is Aspartyl/glutamyl-tRNA(Asn/Gln) amidotransferase subunit B (476 aa).

Belongs to the GatB/GatE family. GatB subfamily. In terms of assembly, heterotrimer of A, B and C subunits.

It carries out the reaction L-glutamyl-tRNA(Gln) + L-glutamine + ATP + H2O = L-glutaminyl-tRNA(Gln) + L-glutamate + ADP + phosphate + H(+). The catalysed reaction is L-aspartyl-tRNA(Asn) + L-glutamine + ATP + H2O = L-asparaginyl-tRNA(Asn) + L-glutamate + ADP + phosphate + 2 H(+). Functionally, allows the formation of correctly charged Asn-tRNA(Asn) or Gln-tRNA(Gln) through the transamidation of misacylated Asp-tRNA(Asn) or Glu-tRNA(Gln) in organisms which lack either or both of asparaginyl-tRNA or glutaminyl-tRNA synthetases. The reaction takes place in the presence of glutamine and ATP through an activated phospho-Asp-tRNA(Asn) or phospho-Glu-tRNA(Gln). In Clostridium botulinum (strain Kyoto / Type A2), this protein is Aspartyl/glutamyl-tRNA(Asn/Gln) amidotransferase subunit B.